A 959-amino-acid chain; its full sequence is MTQNLSQLEHNDAFIQRHIGSSAEQQQQMLAAVGANSLSTLIQQIVPADIQLPSPPPVGEAATEHQALAELKGIASQNQRYKSYIGMGYSPVLTPPVILRNMLENPGWYTAYTPYQPEVSQGRLEALLNFQQLTQDLTGLDLASASLLDEATAAAESMALAKRASKLKDANRFFVADDVHPQTLDVVLTRAETFGFEVIVDRAEKVLELDGVFGVLLQQVGTTGELHDYSALLAELKKRKIITSVAADIMALVLLTAPGKQGADVVFGSAQRFGVPMGYGGPHAAFFACRDEFKRSMPGRIIGVSRDAAGNTALRMAMQTREQHIRREKANSNICTSQVLLANIASLYAVYHGPQGLQRIAGRIHRMTDILAAGLQQAGLALRFTHWFDTLTVEVKDKAAVLARALSFGINLRTDIHGAVGITLDETTSREDLQILFTLLVGDNHGLDIDLLDAKVSQNSQSIQTGMLRQEPILTHPVFNRYHSETEMMRYMHRLERKDLALNQAMIPLGSCTMKLNAAAEMIPITWPEFAELHPFCPPEQAAGYQQMIGQLSQWLVQLTGYDAVCMQPNSGAQGEYAGLLAIRRYHESRNQASRHICLIPSSAHGTNPASAQMAGMSVVVVACDKQGNIDLHDLRQKAGEAGDELSCIMVTYPSTHGVYEETIREVCQIVHQFGGQVYLDGANMNAQVGITTPGYIGADVSHLNLHKTFCIPHGGGGPGMGPIGVKAHLAPFVPGHSVVQIDGMTTQQGAVSAAPFGSASILPISWMYIRMMGADGLKQASQVAILNANYIATRLKEAYPVLYTGHDGSVAHECILDIRPLKEATGISEMDIAKRLIDFGFHAPTMSFPVAGTLMVEPTESESKVELDRFIDAMLAIRAEIEKVARGEWPLEDNPLVNAPHTQAELVGEWQHPYSRELAVFPVAGVMENKYWPSVKRLDDVYGDRNLFCSCVPISDYE.

Lys708 carries the post-translational modification N6-(pyridoxal phosphate)lysine.

The protein belongs to the GcvP family. The glycine cleavage system is composed of four proteins: P, T, L and H. It depends on pyridoxal 5'-phosphate as a cofactor.

The enzyme catalyses N(6)-[(R)-lipoyl]-L-lysyl-[glycine-cleavage complex H protein] + glycine + H(+) = N(6)-[(R)-S(8)-aminomethyldihydrolipoyl]-L-lysyl-[glycine-cleavage complex H protein] + CO2. Functionally, the glycine cleavage system catalyzes the degradation of glycine. The P protein binds the alpha-amino group of glycine through its pyridoxal phosphate cofactor; CO(2) is released and the remaining methylamine moiety is then transferred to the lipoamide cofactor of the H protein. The protein is Glycine dehydrogenase (decarboxylating) of Yersinia enterocolitica serotype O:8 / biotype 1B (strain NCTC 13174 / 8081).